Consider the following 217-residue polypeptide: Growth hormone variant (217 aa).

The signal sequence occupies residues 1–26; sequence MAAGSRTSLLLAFGLLCLPWLQEGSA. 2 disulfide bridges follow: C79/C191 and C208/C215. S132 carries the phosphoserine modification. Residue N166 is glycosylated (N-linked (GlcNAc...) asparagine). S176 carries the phosphoserine modification.

Belongs to the somatotropin/prolactin family. Expressed in the placenta.

It is found in the secreted. Plays an important role in growth control. Its major role in stimulating body growth is to stimulate the liver and other tissues to secrete IGF1. It stimulates both the differentiation and proliferation of myoblasts. It also stimulates amino acid uptake and protein synthesis in muscle and other tissues. The chain is Growth hormone variant (GH2) from Pan troglodytes (Chimpanzee).